A 103-amino-acid chain; its full sequence is MAAAAMPLEELERWLQARVDRQPIATSLAMLDGYVAAIVAGPVSMSPLDWICPLLAIDADAFNHGDTPEFAAIFAVALRHNDISNVLRPRPTSSSRCTGANPW.

A helical membrane pass occupies residues 33-57 (GYVAAIVAGPVSMSPLDWICPLLAI).

The protein resides in the membrane. This is an uncharacterized protein from Sinorhizobium fredii (strain NBRC 101917 / NGR234).